The sequence spans 628 residues: Forkhead box protein O (628 aa).

Disordered regions lie at residues Arg39–Gln77, Lys182–Lys205, Gly217–Pro269, Gln316–Tyr359, and Asn389–Val415. A Phosphothreonine; by PKB/AKT1 modification is found at Thr44. Residues Thr63–Gln77 are compositionally biased toward polar residues. Ser75 carries the post-translational modification Phosphoserine. A DNA-binding region (fork-head) is located at residues Trp95–Gly201. Position 190 is a phosphoserine; by PKB/AKT1 (Ser190). 2 stretches are compositionally biased toward polar residues: residues Ala221 to Ser230 and Arg256 to Gly265. Position 259 is a phosphoserine; by PKB/AKT1 (Ser259). A phosphoserine mark is found at Ser262, Ser263, and Ser268. Residues Ser328 to Pro337 are compositionally biased toward pro residues. Residues Pro338–Ala351 show a composition bias toward low complexity. Polar residues predominate over residues Ser402–Asn414.

In terms of assembly, interacts with melt.

The protein localises to the cytoplasm. Its subcellular location is the nucleus. Its function is as follows. Transcription factor involved in the regulation of the insulin signaling pathway. Consistently activates both the downstream target Thor\d4EBP and the feedback control target InR. Involved in negative regulation of the cell cycle, modulating cell growth and proliferation. In response to cellular stresses, such as nutrient deprivation or increased levels of reactive oxygen species, foxo is activated and inhibits growth through the action of target genes such as Thor. Foxo activated in the adult fat body can regulate lifespan in adults; an insulin peptide itself may function as one secondary messenger of insulin-regulated aging. Also regulates Lip4, homolog of human acid lipases, thereby acting as a key modulator of lipid metabolism by insulin signaling and integrates insulin responses to glucose and lipid homeostasis. This chain is Forkhead box protein O, found in Drosophila yakuba (Fruit fly).